A 930-amino-acid chain; its full sequence is Dual serine/threonine and tyrosine protein kinase (930 aa).

Residues 383–428 (RKENELYESLMNIANRKQEEMKDMIIETLSNMKEELLEDAANMEFK) are a coiled coil. Residues 653 to 907 (PKLGRELGRG…PLLGIVQPML (255 aa)) enclose the Protein kinase domain. Residues 659 to 667 (LGRGQYGVV) and lysine 682 each bind ATP. Aspartate 778 acts as the Proton acceptor in catalysis.

It belongs to the protein kinase superfamily. Ser/Thr protein kinase family. In terms of tissue distribution, widely expressed with the highest expression in brain and ovary.

Its subcellular location is the cytoplasm. It is found in the cell membrane. The protein localises to the apical cell membrane. It localises to the basolateral cell membrane. The protein resides in the cell junction. It catalyses the reaction L-seryl-[protein] + ATP = O-phospho-L-seryl-[protein] + ADP + H(+). It carries out the reaction L-threonyl-[protein] + ATP = O-phospho-L-threonyl-[protein] + ADP + H(+). The enzyme catalyses L-tyrosyl-[protein] + ATP = O-phospho-L-tyrosyl-[protein] + ADP + H(+). May act as a positive regulator of ERK phosphorylation downstream of fibroblast growth factor-receptor activation. May induce both caspase-dependent apoptosis and caspase-independent cell death. This is Dual serine/threonine and tyrosine protein kinase (DSTYK) from Gallus gallus (Chicken).